The primary structure comprises 426 residues: Serine--tRNA ligase (426 aa).

An L-serine-binding site is contributed by 231 to 233; sequence TAE. 262 to 264 contacts ATP; sequence RSE. Glu-285 provides a ligand contact to L-serine. Residue 349-352 participates in ATP binding; it reads EISS. Ser-384 is a binding site for L-serine.

Belongs to the class-II aminoacyl-tRNA synthetase family. Type-1 seryl-tRNA synthetase subfamily. In terms of assembly, homodimer. The tRNA molecule binds across the dimer.

The protein resides in the cytoplasm. The enzyme catalyses tRNA(Ser) + L-serine + ATP = L-seryl-tRNA(Ser) + AMP + diphosphate + H(+). It carries out the reaction tRNA(Sec) + L-serine + ATP = L-seryl-tRNA(Sec) + AMP + diphosphate + H(+). The protein operates within aminoacyl-tRNA biosynthesis; selenocysteinyl-tRNA(Sec) biosynthesis; L-seryl-tRNA(Sec) from L-serine and tRNA(Sec): step 1/1. Functionally, catalyzes the attachment of serine to tRNA(Ser). Is also able to aminoacylate tRNA(Sec) with serine, to form the misacylated tRNA L-seryl-tRNA(Sec), which will be further converted into selenocysteinyl-tRNA(Sec). In Laribacter hongkongensis (strain HLHK9), this protein is Serine--tRNA ligase.